Here is a 204-residue protein sequence, read N- to C-terminus: Transcription factor bHLH120 (204 aa).

2 disordered regions span residues Met-1 to Lys-27 and Lys-93 to Pro-116. Residues Glu-26 to Thr-78 form the bHLH domain.

Homodimer.

It localises to the nucleus. This Arabidopsis thaliana (Mouse-ear cress) protein is Transcription factor bHLH120 (BHLH120).